Consider the following 375-residue polypeptide: Succinyl-diaminopimelate desuccinylase (375 aa).

His66 contributes to the Zn(2+) binding site. Residue Asp68 is part of the active site. Asp99 provides a ligand contact to Zn(2+). Glu133 functions as the Proton acceptor in the catalytic mechanism. Zn(2+)-binding residues include Glu134, Glu162, and His348.

Belongs to the peptidase M20A family. DapE subfamily. As to quaternary structure, homodimer. Requires Zn(2+) as cofactor. Co(2+) serves as cofactor.

It carries out the reaction N-succinyl-(2S,6S)-2,6-diaminopimelate + H2O = (2S,6S)-2,6-diaminopimelate + succinate. It functions in the pathway amino-acid biosynthesis; L-lysine biosynthesis via DAP pathway; LL-2,6-diaminopimelate from (S)-tetrahydrodipicolinate (succinylase route): step 3/3. Its function is as follows. Catalyzes the hydrolysis of N-succinyl-L,L-diaminopimelic acid (SDAP), forming succinate and LL-2,6-diaminopimelate (DAP), an intermediate involved in the bacterial biosynthesis of lysine and meso-diaminopimelic acid, an essential component of bacterial cell walls. The sequence is that of Succinyl-diaminopimelate desuccinylase from Stenotrophomonas maltophilia (strain R551-3).